The sequence spans 149 residues: Large ribosomal subunit protein uL15 (149 aa).

A disordered region spans residues 1–54 (MSLKLHNLKPTPNSRPEKHRKGRGHAAGKGKQAGKGQSGQNKRKGHRLGFEGGQ). The span at 17 to 28 (EKHRKGRGHAAG) shows a compositional bias: basic residues.

The protein belongs to the universal ribosomal protein uL15 family. In terms of assembly, part of the 50S ribosomal subunit.

In terms of biological role, binds to the 23S rRNA. This chain is Large ribosomal subunit protein uL15, found in Mycoplasmopsis synoviae (strain 53) (Mycoplasma synoviae).